Reading from the N-terminus, the 621-residue chain is Chaperone protein HtpG (621 aa).

The segment at M1–R325 is a; substrate-binding. The interval E326–R541 is b. Positions M542–L621 are c.

The protein belongs to the heat shock protein 90 family. In terms of assembly, homodimer.

It localises to the cytoplasm. Functionally, molecular chaperone. Has ATPase activity. In Roseobacter denitrificans (strain ATCC 33942 / OCh 114) (Erythrobacter sp. (strain OCh 114)), this protein is Chaperone protein HtpG.